Reading from the N-terminus, the 459-residue chain is Mycothione reductase (459 aa).

31-39 (EQGTFGGTC) lines the FAD pocket. Cys-39 and Cys-44 are disulfide-bonded. Residue His-444 is the Proton acceptor of the active site.

It belongs to the class-I pyridine nucleotide-disulfide oxidoreductase family. As to quaternary structure, homodimer. The cofactor is FAD.

The enzyme catalyses 2 mycothiol + NADP(+) = mycothione + NADPH + H(+). It catalyses the reaction 2 mycothiol + NAD(+) = mycothione + NADH + H(+). Its function is as follows. Catalyzes the NAD(P)H-dependent reduction of mycothione (the oxidized disulfide form of mycothiol) to mycothiol. The chain is Mycothione reductase (mtr) from Mycobacterium tuberculosis (strain CDC 1551 / Oshkosh).